The primary structure comprises 249 residues: tRNA pseudouridine synthase A (249 aa).

Residue Asp-53 is the Nucleophile of the active site. Substrate is bound at residue Tyr-111.

Belongs to the tRNA pseudouridine synthase TruA family. In terms of assembly, homodimer.

The catalysed reaction is uridine(38/39/40) in tRNA = pseudouridine(38/39/40) in tRNA. Formation of pseudouridine at positions 38, 39 and 40 in the anticodon stem and loop of transfer RNAs. The sequence is that of tRNA pseudouridine synthase A from Streptococcus pneumoniae (strain 70585).